Reading from the N-terminus, the 548-residue chain is Thermosome subunit beta (548 aa).

The protein belongs to the TCP-1 chaperonin family. As to quaternary structure, forms a Heterooligomeric complex of two stacked eight-membered rings.

Molecular chaperone; binds unfolded polypeptides in vitro, and has a weak ATPase activity. The chain is Thermosome subunit beta (thsB) from Aeropyrum pernix (strain ATCC 700893 / DSM 11879 / JCM 9820 / NBRC 100138 / K1).